Reading from the N-terminus, the 239-residue chain is MKYYDILNSACNDVGIGFDENKYNAFIKYKSMIQEWNKKINLTAITEDEDIIKKHFIDCIKIYKFDKFKKLNKIMDVGTGAGFPGIPIKILEEEKEVILLDSLNKRIKFLDEVSKELKLENIKNLHGRAEDYAQKEEFREQFDGVVSRAVANISVLSEFCLPYIRVGGYFIAMKGPNVSEEIDEGKKAIELLGGKLQEIIQVEVEESDLKHNLVIIEKIKNTPNKYPRKAGMVTKKPLK.

Residues Gly78, Phe83, 129–130 (AE), and Arg148 each bind S-adenosyl-L-methionine.

This sequence belongs to the methyltransferase superfamily. RNA methyltransferase RsmG family.

It localises to the cytoplasm. In terms of biological role, specifically methylates the N7 position of a guanine in 16S rRNA. In Clostridium tetani (strain Massachusetts / E88), this protein is Ribosomal RNA small subunit methyltransferase G.